The sequence spans 566 residues: Serine/threonine-protein kinase PknE (566 aa).

The Cytoplasmic portion of the chain corresponds to 1–337; that stretch reads MDGTAESREG…PLPRSARQPW (337 aa). Position 7 is a phosphoserine; by autocatalysis (serine 7). At threonine 11 the chain carries Phosphothreonine; by autocatalysis. The 260-residue stretch at 16–275 folds into the Protein kinase domain; sequence YRLRRLVGRG…DLSAAAHAAL (260 aa). ATP contacts are provided by residues 22–30 and lysine 45; that span reads VGRGGMGDV. 2 positions are modified to phosphothreonine; by autocatalysis: threonine 50 and threonine 59. Aspartate 139 serves as the catalytic Proton acceptor. A phosphothreonine; by autocatalysis mark is found at threonine 170, threonine 175, and threonine 178. Positions 296 to 330 are disordered; it reads PVPSTHPVSPGTRWPQPTPWAGGAPPWGPPSSPLP. A helical transmembrane segment spans residues 338-358; the sequence is LWVGVAVAVVVALAGGLGIAL. The Extracellular portion of the chain corresponds to 359–566; sequence AHPWRSSGPR…DPSWLARLIG (208 aa).

This sequence belongs to the protein kinase superfamily. Ser/Thr protein kinase family. Homodimer. In terms of processing, autophosphorylated on serine and threonine residues. Dephosphorylated by PstP.

It localises to the cell membrane. It catalyses the reaction L-seryl-[protein] + ATP = O-phospho-L-seryl-[protein] + ADP + H(+). The catalysed reaction is L-threonyl-[protein] + ATP = O-phospho-L-threonyl-[protein] + ADP + H(+). Functionally, a serine/threonine-protein kinase, acts on HupB in vitro, modifying at least 2 Ser and 8 Thr residues. Important for bacterial survival in the host during infection. In Mycobacterium tuberculosis (strain ATCC 25177 / H37Ra), this protein is Serine/threonine-protein kinase PknE.